Reading from the N-terminus, the 179-residue chain is Large ribosomal subunit protein uL5 (179 aa).

The protein belongs to the universal ribosomal protein uL5 family. Part of the 50S ribosomal subunit; part of the 5S rRNA/L5/L18/L25 subcomplex. Contacts the 5S rRNA and the P site tRNA. Forms a bridge to the 30S subunit in the 70S ribosome.

Its function is as follows. This is one of the proteins that bind and probably mediate the attachment of the 5S RNA into the large ribosomal subunit, where it forms part of the central protuberance. In the 70S ribosome it contacts protein S13 of the 30S subunit (bridge B1b), connecting the 2 subunits; this bridge is implicated in subunit movement. Contacts the P site tRNA; the 5S rRNA and some of its associated proteins might help stabilize positioning of ribosome-bound tRNAs. This is Large ribosomal subunit protein uL5 from Maridesulfovibrio salexigens (strain ATCC 14822 / DSM 2638 / NCIMB 8403 / VKM B-1763) (Desulfovibrio salexigens).